The chain runs to 671 residues: Leucine aminopeptidase 2 (671 aa).

Residues 184-186 and 311-316 each bind substrate; these read QLE and PYGGME. His340 provides a ligand contact to Zn(2+). Glu341 serves as the catalytic Proton acceptor. Zn(2+) is bound by residues His344 and Glu363. Residue Tyr429 is the Proton donor of the active site.

Belongs to the peptidase M1 family. Zn(2+) is required as a cofactor.

The protein resides in the cytoplasm. It localises to the nucleus. It catalyses the reaction an epoxide + H2O = an ethanediol. With respect to regulation, inhibited by 3-(4-benzyloxyphenyl)-2-(R)-amino-1-propanethiol (thioamine) and N-hydroxy-N-(2-(S)-amino-3-(4-benzyloxyphenyl)propyl)-5-carboxypen-tanamide (hydroxamic acid). The aminopeptidase activity is stimulated by LTA(4). In terms of biological role, aminopeptidase that preferentially cleaves di- and tripeptides. Also has low epoxide hydrolase activity (in vitro). Can hydrolyze the epoxide leukotriene LTA(4) but it forms preferentially 5,6-dihydroxy-7,9,11,14-eicosatetraenoic acid rather than the cytokine leukotriene B(4) as the product compared to the homologous mammalian enzyme (in vitro). In Saccharomyces cerevisiae (strain YJM789) (Baker's yeast), this protein is Leucine aminopeptidase 2.